The sequence spans 339 residues: Lipoate-protein ligase A (339 aa).

The region spanning 28–211 (NPDSHTLFLW…AFREYYRDTD (184 aa)) is the BPL/LPL catalytic domain. ATP-binding positions include Arg70, 75-78 (GAVF), and Lys129. Lys129 lines the (R)-lipoate pocket.

This sequence belongs to the LplA family. As to quaternary structure, monomer.

The protein resides in the cytoplasm. It carries out the reaction L-lysyl-[lipoyl-carrier protein] + (R)-lipoate + ATP = N(6)-[(R)-lipoyl]-L-lysyl-[lipoyl-carrier protein] + AMP + diphosphate + H(+). Its pathway is protein modification; protein lipoylation via exogenous pathway; protein N(6)-(lipoyl)lysine from lipoate: step 1/2. The protein operates within protein modification; protein lipoylation via exogenous pathway; protein N(6)-(lipoyl)lysine from lipoate: step 2/2. Catalyzes both the ATP-dependent activation of exogenously supplied lipoate to lipoyl-AMP and the transfer of the activated lipoyl onto the lipoyl domains of lipoate-dependent enzymes. The chain is Lipoate-protein ligase A from Psychrobacter cryohalolentis (strain ATCC BAA-1226 / DSM 17306 / VKM B-2378 / K5).